The sequence spans 355 residues: MSVLGELDLLGPRAHGAACGEAVLKAVAEDFQVDEVLDIPLSGEGEHLWLWVEKRGLNTEEAARRLGRAAGVQQKNVSYAGLKDRQALTRQWFSLHLPGKADPDLGAAEGADLRILRRTRHSRKLQRGAHAANGFTLRLTGLRAERALLDARLERIAADGVPNYFGLQRFGHGGGNLVDARSCAEQDLLPANRNLRSRFLSAGRSYLFNRLLAERVAEGSWNRAAVGDLLAFTDSRSFFLAGEEECRDARLAALDLHPTGPLWGEGDPPSGAGVLDRELALAGSEPALCRWLAKAGMAHERRILRLPIQGLAWHYPEPDVLQLEFVLPAGCFATVVVREILDLVPTGQTENPCAY.

The active-site Nucleophile is D84. A TRUD domain is found at 160 to 306; the sequence is GVPNYFGLQR…MAHERRILRL (147 aa).

This sequence belongs to the pseudouridine synthase TruD family.

The enzyme catalyses uridine(13) in tRNA = pseudouridine(13) in tRNA. Its function is as follows. Responsible for synthesis of pseudouridine from uracil-13 in transfer RNAs. The polypeptide is tRNA pseudouridine synthase D (Pseudomonas aeruginosa (strain UCBPP-PA14)).